The chain runs to 618 residues: Methionine--tRNA ligase (618 aa).

Residues 12–22 (YYVNAEPHLGH) carry the 'HIGH' region motif. Cys127, Cys130, Cys144, and His147 together coordinate Zn(2+). Positions 297–301 (KMSKT) match the 'KMSKS' region motif. Lys300 lines the ATP pocket. In terms of domain architecture, tRNA-binding spans 518-618 (DFAKVELRVA…GEVPPGAVVK (101 aa)).

It belongs to the class-I aminoacyl-tRNA synthetase family. MetG type 2A subfamily. Homodimer. It depends on Zn(2+) as a cofactor.

It localises to the cytoplasm. It carries out the reaction tRNA(Met) + L-methionine + ATP = L-methionyl-tRNA(Met) + AMP + diphosphate. In terms of biological role, is required not only for elongation of protein synthesis but also for the initiation of all mRNA translation through initiator tRNA(fMet) aminoacylation. The polypeptide is Methionine--tRNA ligase (metG) (Thermus thermophilus (strain ATCC 27634 / DSM 579 / HB8)).